Reading from the N-terminus, the 344-residue chain is C-C chemokine receptor-like 2 (344 aa).

At 1–43 (MANYTLAPEDEYDVLIEGELESDEAEQCDRYDTWALSAQLVPS) the chain is on the extracellular side. A glycan (N-linked (GlcNAc...) asparagine) is linked at N3. Residues 44-64 (LCSAVFVVGVLDNLLVVLILV) traverse the membrane as a helical segment. The Cytoplasmic segment spans residues 65–74 (KYKGLKRVEN). Residues 75-95 (IYLLNLAVSNLCFLLTLPFWA) traverse the membrane as a helical segment. Residues 96–104 (HAGGDPMCK) lie on the Extracellular side of the membrane. C103 and C181 form a disulfide bridge. A helical membrane pass occupies residues 105-125 (ILIGLYFVGLYSETFFNCLLT). Topologically, residues 126–148 (LQRYLVFLHKGNFFSVRRRVPCG) are cytoplasmic. The helical transmembrane segment at 149–169 (IVTSAVAWVTAILATVPEFAV) threads the bilayer. Topologically, residues 170–198 (YKPQMEDPKYKCAFSRTPFLPADETFWKH) are extracellular. Residues 199-219 (FLTLKMNVSVLVFPLFIFTFL) form a helical membrane-spanning segment. The Cytoplasmic portion of the chain corresponds to 220 to 238 (YVQMRKTLRFGEQRYSLFK). The helical transmembrane segment at 239–259 (LVFAIMVVFLLMWAPYNIALF) threads the bilayer. At 260–281 (LSTFKEHFSLSDCKSNYNLDKS) the chain is on the extracellular side. The chain crosses the membrane as a helical span at residues 282 to 302 (VLITKLIATTHCCVNPLLYVF). Residues 303 to 344 (LDGTFRKYLCRFFHRRSNTPRQPRRRFAQGTSREEPDRSTEV) lie on the Cytoplasmic side of the membrane. Residues 323–344 (RQPRRRFAQGTSREEPDRSTEV) form a disordered region. Positions 334-344 (SREEPDRSTEV) are enriched in basic and acidic residues.

The protein belongs to the G-protein coupled receptor 1 family.

It is found in the cell membrane. Its function is as follows. Receptor for CCL19 and chemerin/RARRES2. Does not appear to be a signaling receptor, but may have a role in modulating chemokine-triggered immune responses by capturing and internalizing CCL19 or by presenting RARRES2 ligand to CMKLR1, a functional signaling receptor. Plays a critical role for the development of Th2 responses. In Macaca mulatta (Rhesus macaque), this protein is C-C chemokine receptor-like 2 (CCRL2).